A 369-amino-acid chain; its full sequence is 4-hydroxy-3-methylbut-2-en-1-yl diphosphate synthase (flavodoxin) (369 aa).

The [4Fe-4S] cluster site is built by C268, C271, C303, and E310.

This sequence belongs to the IspG family. The cofactor is [4Fe-4S] cluster.

It catalyses the reaction (2E)-4-hydroxy-3-methylbut-2-enyl diphosphate + oxidized [flavodoxin] + H2O + 2 H(+) = 2-C-methyl-D-erythritol 2,4-cyclic diphosphate + reduced [flavodoxin]. It functions in the pathway isoprenoid biosynthesis; isopentenyl diphosphate biosynthesis via DXP pathway; isopentenyl diphosphate from 1-deoxy-D-xylulose 5-phosphate: step 5/6. In terms of biological role, converts 2C-methyl-D-erythritol 2,4-cyclodiphosphate (ME-2,4cPP) into 1-hydroxy-2-methyl-2-(E)-butenyl 4-diphosphate. The polypeptide is 4-hydroxy-3-methylbut-2-en-1-yl diphosphate synthase (flavodoxin) (Exiguobacterium sibiricum (strain DSM 17290 / CCUG 55495 / CIP 109462 / JCM 13490 / 255-15)).